The primary structure comprises 339 residues: UPF0324 membrane protein spyM18_1033 (339 aa).

The next 9 membrane-spanning stretches (helical) occupy residues 7-24 (KLPG…AWYL), 28-50 (FPII…FYGH), 57-79 (GISF…GLNL), 84-106 (AVGM…VAYG), 118-140 (ATLV…APVI), 150-172 (AISV…GQLL), 256-275 (FILF…SFGV), 290-307 (FIVM…LVKL), and 314-336 (AILL…QLSL).

The protein belongs to the UPF0324 family.

It localises to the cell membrane. The chain is UPF0324 membrane protein spyM18_1033 from Streptococcus pyogenes serotype M18 (strain MGAS8232).